A 152-amino-acid chain; its full sequence is UPF0178 protein YaiI (152 aa).

Belongs to the UPF0178 family.

This is UPF0178 protein YaiI from Shigella flexneri.